The sequence spans 351 residues: Penicillolysin (351 aa).

Positions Met-1–Ala-19 are cleaved as a signal peptide. A propeptide spanning residues Phe-20–Arg-174 is cleaved from the precursor. 2 N-linked (GlcNAc...) asparagine glycosylation sites follow: Asn-52 and Asn-181. A Zn(2+)-binding site is contributed by His-302. Glu-303 is a catalytic residue. Residues His-306 and Asp-317 each coordinate Zn(2+).

The protein belongs to the peptidase M35 family. The cofactor is Zn(2+).

The catalysed reaction is Preferential cleavage of bonds with hydrophobic residues in P1'. Also 3-Asn-|-Gln-4 and 8-Gly-|-Ser-9 bonds in insulin B chain.. This Penicillium citrinum protein is Penicillolysin (plnC).